A 343-amino-acid polypeptide reads, in one-letter code: Flagellar motor switch protein FliG (343 aa).

The Part of the EHPQR-motif motif lies at 137 to 140 (EHPQ). The M-F-X-F motif; its intrinsic flexibility is probably coupled to flagellar rotation signature appears at 245–248 (MFTF).

Belongs to the FliG family.

It localises to the cell inner membrane. The protein resides in the bacterial flagellum basal body. Its function is as follows. One of the proteins that forms a switch complex that is proposed to be located at the base of the basal body. This complex interacts with chemotaxis proteins (such as CheY) in addition to contacting components of the motor that determine the direction of flagellar rotation. Required for flagellum synthesis and motility. In H.pylori four flagellar switch proteins are encoded, FliG, FliM, FliN and FliY. The sequence is that of Flagellar motor switch protein FliG from Helicobacter pylori (strain ATCC 700392 / 26695) (Campylobacter pylori).